A 196-amino-acid chain; its full sequence is Mpv17-like protein (196 aa).

Over 1-16 (MAGWWPALSRAARRHP) the chain is Cytoplasmic. The segment at 16 to 55 (PWPTNVLLYGSLVSAGDALQQRLQGREANWRQTRRVATLV) is targeting to peroxisomes. Residues 17–34 (WPTNVLLYGSLVSAGDAL) traverse the membrane as a helical segment. Over 35–50 (QQRLQGREANWRQTRR) the chain is Lumenal. Residues 51 to 67 (VATLVVTFHANFNYVWL) form a helical membrane-spanning segment. The Cytoplasmic segment spans residues 68–90 (RLLERALPGRAPHALLAKLLCDQ). Residues 91-108 (VVGAPIAVSAFYVGMSIL) traverse the membrane as a helical segment. Over 109–150 (QGKDDIFLDLKQKFWNTYLSGLMYWPFVQLTNFSLVPVQWRT) the chain is Lumenal. A helical membrane pass occupies residues 151–167 (AYAGVCGFLWATFICFS). Residues 168 to 196 (QQSGDGTFKSAFTILYTKGTSATEGYPKK) lie on the Cytoplasmic side of the membrane.

Belongs to the peroxisomal membrane protein PXMP2/4 family. As to expression, isoform 1 is detected in the kidney (at protein level). Isoform 1 and isoform 2 are expressed in the kidney, heart, liver, lung, pancreas and skeletal muscle.

It is found in the peroxisome membrane. Participates in reactive oxygen species metabolism by up- or down-regulation of the genes of antioxidant enzymes. Protective against the mitochondrial apoptotic cascade. This chain is Mpv17-like protein (MPV17L), found in Homo sapiens (Human).